We begin with the raw amino-acid sequence, 346 residues long: NADH-ubiquinone oxidoreductase chain 2 (346 aa).

11 helical membrane-spanning segments follow: residues 1–21 (MNPH…TITI), 25–45 (HWIM…PLIS), 60–80 (FLVQ…NAWA), 96–116 (MLLT…FWFP), 124–144 (LTTA…ILLM), 149–169 (LNPT…GWMG), 178–198 (ILAF…IYNP), 200–220 (LTLL…LSLN), 242–262 (AALM…GFMP), 274–294 (EMTT…FFYL), and 325–345 (IAIL…ILAA).

It belongs to the complex I subunit 2 family.

Its subcellular location is the mitochondrion inner membrane. The catalysed reaction is a ubiquinone + NADH + 5 H(+)(in) = a ubiquinol + NAD(+) + 4 H(+)(out). Core subunit of the mitochondrial membrane respiratory chain NADH dehydrogenase (Complex I) that is believed to belong to the minimal assembly required for catalysis. Complex I functions in the transfer of electrons from NADH to the respiratory chain. The immediate electron acceptor for the enzyme is believed to be ubiquinone. This Struthio camelus (Common ostrich) protein is NADH-ubiquinone oxidoreductase chain 2 (MT-ND2).